The following is a 171-amino-acid chain: uncharacterized protein (171 aa).

Residues 1–17 (MLKRIIWILFLLGLTWG) form the signal peptide.

Part of the elfADCG-ycbUVF fimbrial operon, which promotes adhesion of bacteria to different abiotic surfaces. This is an uncharacterized protein from Escherichia coli (strain K12).